The chain runs to 132 residues: Small ribosomal subunit protein uS8 (132 aa).

This sequence belongs to the universal ribosomal protein uS8 family. Part of the 30S ribosomal subunit. Contacts proteins S5 and S12.

Its function is as follows. One of the primary rRNA binding proteins, it binds directly to 16S rRNA central domain where it helps coordinate assembly of the platform of the 30S subunit. The protein is Small ribosomal subunit protein uS8 of Bifidobacterium longum (strain NCC 2705).